A 649-amino-acid polypeptide reads, in one-letter code: Transcription factor E2-alpha (649 aa).

Disordered stretches follow at residues 37-107 (RPAS…SERN), 132-207 (GLSS…AKTP), 296-325 (TYSG…SSSG), and 339-376 (DHSS…ALSP). Polar residues predominate over residues 57-71 (SESWGNSEQNSSSFD). Over residues 132 to 148 (GLSSPGPLSPSGVKSSS) the composition is skewed to low complexity. A phosphoserine mark is found at Ser135 and Ser140. The short motif at 171–177 (PKKVRKV) is the Nuclear localization signal element. Over residues 339–352 (DHSSNNFSPSPSTP) the composition is skewed to low complexity. At Thr351 the chain carries Phosphothreonine. Ser355 carries the post-translational modification Phosphoserine. Arg367 carries the post-translational modification Omega-N-methylarginine. Ser375 carries the post-translational modification Phosphoserine. The leucine-zipper stretch occupies residues 385 to 420 (LSKMEDRLDEAIHVLRSHAVGTASELHGLLPGHSTL). The segment at 435–547 (AGLVSGSHPE…KAEREKERRV (113 aa)) is disordered. The span at 459–477 (SLPSQPSSLPDLSQRPPDS) shows a compositional bias: low complexity. Residue Lys494 forms a Glycyl lysine isopeptide (Lys-Gly) (interchain with G-Cter in SUMO2) linkage. Ser524 carries the post-translational modification Phosphoserine. At Asp526 the chain carries Phosphothreonine. Over residues 537 to 547 (QKAEREKERRV) the composition is skewed to basic and acidic residues. A bHLH domain is found at 544–597 (ERRVANNARERLRVRDINEAFKELGRMCQLHLSTEKPQTKLLILHQAVAVILSL). Lys620 is covalently cross-linked (Glycyl lysine isopeptide (Lys-Gly) (interchain with G-Cter in SUMO2)).

As to quaternary structure, homodimer. Heterodimer; efficient DNA binding requires dimerization with another bHLH protein. Forms a heterodimer with TWIST1 and TWIST2. Forms a heterodimer with NEUROD1; the heterodimer is inhibited in presence of ID2, but not NR0B2, to E-box element. Forms a heterodimer with TCF15; the heterodimer binds E-box element. Forms a heterodimer with MYOG; heterodimerization enhances MYOG DNA-binding and transcriptional activities. Forms a heterodimer with ATOH8; repress transcription of TCF3 and TCF3-NEUROG3 dimer-induced transactivation of E box-dependent promoters. Component of a nuclear TAL-1 complex composed at least of CBFA2T3, LDB1, TAL1 and TCF3. Interacts with NEUROD2. Interacts with EP300. Interacts with PTF1A, TGFB1I1. Interacts with UBE2I. Interacts with BHLHA9. Interacts with ASB2; the interaction is mediated by SKP2 and targets TCF3 for Notch-induced proteasomal degradation. Interacts with transcription factor ASCL5/AmeloD. In terms of assembly, interacts with RALGAPA1. Interacts with FIGLA. Forms a heterodimer with ATOH7; required for ATOH7 DNA-binding. In terms of processing, phosphorylated following NGF stimulation. Post-translationally, undergoes Notch-induced ubiquitination and subsequent proteasomal degradation which is mediated by ASB1 or ASB2, the substrate-recognition components of probable ECS E3 ubiquitin-protein ligase complexes.

Its subcellular location is the nucleus. In terms of biological role, transcriptional regulator involved in the initiation of neuronal differentiation and mesenchymal to epithelial transition. Heterodimers between TCF3 and tissue-specific basic helix-loop-helix (bHLH) proteins play major roles in determining tissue-specific cell fate during embryogenesis, like muscle or early B-cell differentiation. Together with TCF15, required for the mesenchymal to epithelial transition. Dimers bind DNA on E-box motifs: 5'-CANNTG-3'. Binds to the kappa-E2 site in the kappa immunoglobulin gene enhancer. Binds to the consensus sequence CAC/GCTGT/C present, in the chymotrypsin, insulin, AP-4, and several other gene enhancer motifs. Facilitates ATOH7 binding to DNA at the consensus sequence 5'-CAGGTG-3', and positively regulates transcriptional activity. The chain is Transcription factor E2-alpha (Tcf3) from Rattus norvegicus (Rat).